We begin with the raw amino-acid sequence, 121 residues long: uncharacterized protein (121 aa).

This is an uncharacterized protein from Archaeoglobus fulgidus (strain ATCC 49558 / DSM 4304 / JCM 9628 / NBRC 100126 / VC-16).